Reading from the N-terminus, the 218-residue chain is MAGDAVTVVLPCLNEEESLPAVLAAIPAGYRALVVDNNSTDDTATVAARHGAQVVVEPRPGYGSAVHAGVLAATTPIVAVIDADGSMDAGDLPKLVAELDKGADLVTGRRRPVAGLHWPWVARVGTVVMSWRLRTRHRLPVHDIAPMRVARREALLDLGVVDRRSGYPLELLVRAAAAGWRVVELDVSYGPRTGGKSKVSGSLRGSIIAILDFWKVIS.

It belongs to the glycosyltransferase 2 family.

This is an uncharacterized protein from Mycobacterium bovis (strain ATCC BAA-935 / AF2122/97).